The sequence spans 199 residues: Recombination protein RecR (199 aa).

The C4-type zinc-finger motif lies at 57–72 (CSICGNITDEDPCAIC). The region spanning 80–176 (STILVVEQPK…KVTRLAHGLS (97 aa)) is the Toprim domain.

The protein belongs to the RecR family.

May play a role in DNA repair. It seems to be involved in an RecBC-independent recombinational process of DNA repair. It may act with RecF and RecO. This chain is Recombination protein RecR, found in Lacticaseibacillus casei (strain BL23) (Lactobacillus casei).